An 88-amino-acid polypeptide reads, in one-letter code: Small ribosomal subunit protein bS16 (88 aa).

The protein belongs to the bacterial ribosomal protein bS16 family.

This is Small ribosomal subunit protein bS16 from Symbiobacterium thermophilum (strain DSM 24528 / JCM 14929 / IAM 14863 / T).